The following is a 201-amino-acid chain: Probable quinol oxidase subunit 3 (201 aa).

The next 5 membrane-spanning stretches (helical) occupy residues 20 to 40 (LGFW…FATL), 62 to 82 (LILI…IAIY), 91 to 111 (LMMF…GFEI), 133 to 153 (FFIL…WVIC), and 172 to 192 (FIVS…FTAV).

This sequence belongs to the cytochrome c oxidase subunit 3 family.

Its subcellular location is the cell membrane. It catalyses the reaction 2 a quinol + O2 = 2 a quinone + 2 H2O. In terms of biological role, catalyzes quinol oxidation with the concomitant reduction of oxygen to water. This chain is Probable quinol oxidase subunit 3 (qoxC), found in Staphylococcus epidermidis (strain ATCC 35984 / DSM 28319 / BCRC 17069 / CCUG 31568 / BM 3577 / RP62A).